A 122-amino-acid polypeptide reads, in one-letter code: Small ribosomal subunit protein uS13 (122 aa).

A disordered region spans residues 95 to 122; it reads SLPVRGQRTHTNARTRKGPAKSIAGKKK.

It belongs to the universal ribosomal protein uS13 family. As to quaternary structure, part of the 30S ribosomal subunit. Forms a loose heterodimer with protein S19. Forms two bridges to the 50S subunit in the 70S ribosome.

Functionally, located at the top of the head of the 30S subunit, it contacts several helices of the 16S rRNA. In the 70S ribosome it contacts the 23S rRNA (bridge B1a) and protein L5 of the 50S subunit (bridge B1b), connecting the 2 subunits; these bridges are implicated in subunit movement. Contacts the tRNAs in the A and P-sites. This is Small ribosomal subunit protein uS13 from Mesorhizobium japonicum (strain LMG 29417 / CECT 9101 / MAFF 303099) (Mesorhizobium loti (strain MAFF 303099)).